Here is a 116-residue protein sequence, read N- to C-terminus: MTPLLTLFLVALIGLPLAQALDCHVCAYNGDNCFNPMRCPAMVAYCMTTRTYYTPTRMKVSKSCVPSCFETVYDGYSKHASTTSCCQYDLCNGAGFAAPATLALAPILLATLWGLL.

An N-terminal signal peptide occupies residues 1–20; that stretch reads MTPLLTLFLVALIGLPLAQA. The 85-residue stretch at 21–105 folds into the UPAR/Ly6 domain; that stretch reads LDCHVCAYNG…FAAPATLALA (85 aa). Disulfide bonds link cysteine 23–cysteine 46, cysteine 26–cysteine 33, cysteine 39–cysteine 64, cysteine 68–cysteine 85, and cysteine 86–cysteine 91. Residue asparagine 92 is the site of GPI-anchor amidated asparagine attachment. The propeptide at 93 to 116 is removed in mature form; sequence GAGFAAPATLALAPILLATLWGLL.

In terms of assembly, interacts with nAChRs containing alpha-4:beta-2 (CHRNA4:CHRNB2) and alpha-7 (CHRNA7) subunits. Interacts with CHRNA4 probably in the endoplasmic reticulum prior to nAChR pentameric assembly. Interacts with KCNA2/Potassium voltage-gated channel subfamily A member 2.

It localises to the cell membrane. It is found in the cell projection. The protein resides in the dendrite. The protein localises to the endoplasmic reticulum. In terms of biological role, acts in different tissues through interaction to nicotinic acetylcholine receptors (nAChRs). The proposed role as modulator of nAChR activity seems to be dependent on the nAChR subtype and stoichiometry, and to involve an effect on nAChR trafficking and its cell surface expression, and on single channel properties of the nAChR inserted in the plasma membrane. Modulates functional properties of nicotinic acetylcholine receptors (nAChRs) to prevent excessive excitation, and hence neurodegeneration. Enhances desensitization by increasing both the rate and extent of desensitization of alpha-4:beta-2-containing nAChRs and slowing recovery from desensitization. Promotes large amplitude ACh-evoked currents through alpha-4:beta-2 nAChRs. Is involved in regulation of the nAChR pentameric assembly in the endoplasmic reticulum. Shifts stoichiometry from high sensitivity alpha-4(2):beta-2(3) to low sensitivity alpha-4(3):beta-2(2) nAChR. In vitro modulates alpha-3:beta-4-containing nAChRs. Reduces cell surface expression of (alpha-3:beta-4)(2):beta-4 and (alpha-3:beta-4)(2):alpha-5 nAChRs suggesting an interaction with nAChR alpha-3(-):(+)beta-4 subunit interfaces and an allosteric mode. Corresponding single channel effects characterized by decreased unitary conductance, altered burst proportions and enhanced desensitization/inactivation seem to depend on nAChR alpha:alpha subunit interfaces and are greater in (alpha-3:beta-2)(2):alpha-3 when compared to (alpha-3:beta-2)(2):alpha-5 nAChRs. Prevents plasticity in the primary visual cortex late in life. The sequence is that of Ly-6/neurotoxin-like protein 1 from Saimiri boliviensis boliviensis (Bolivian squirrel monkey).